The primary structure comprises 270 residues: Homeobox protein Hox-D12 (270 aa).

Residues 102–122 (APEAAAGPEERGRTRPSFAPE) are disordered. A DNA-binding region (homeobox) is located at residues 202–261 (ARKKRKPYTKQQIAELENEFLVNEFINRQKRKELSNRLNLSDQQVKIWFQNRRMKKKRVV).

The protein belongs to the Abd-B homeobox family.

The protein localises to the nucleus. Sequence-specific transcription factor which is part of a developmental regulatory system that provides cells with specific positional identities on the anterior-posterior axis. The polypeptide is Homeobox protein Hox-D12 (HOXD12) (Homo sapiens (Human)).